The chain runs to 903 residues: Protein translocase subunit SecA (903 aa).

Residues Gln87, 105–109 (GEGKT), and Asp507 each bind ATP. Positions 854 to 893 (STMADSSGDVKSSTAESKAPYVRDGRKVGRNEPCPCGSGK) are disordered. Positions 856 to 869 (MADSSGDVKSSTAE) are enriched in polar residues. A compositionally biased stretch (basic and acidic residues) spans 874 to 883 (YVRDGRKVGR). Zn(2+) contacts are provided by Cys887, Cys889, Cys898, and His899.

The protein belongs to the SecA family. As to quaternary structure, monomer and homodimer. Part of the essential Sec protein translocation apparatus which comprises SecA, SecYEG and auxiliary proteins SecDF-YajC and YidC. Zn(2+) is required as a cofactor.

The protein resides in the cell inner membrane. It is found in the cytoplasm. The catalysed reaction is ATP + H2O + cellular proteinSide 1 = ADP + phosphate + cellular proteinSide 2.. Part of the Sec protein translocase complex. Interacts with the SecYEG preprotein conducting channel. Has a central role in coupling the hydrolysis of ATP to the transfer of proteins into and across the cell membrane, serving both as a receptor for the preprotein-SecB complex and as an ATP-driven molecular motor driving the stepwise translocation of polypeptide chains across the membrane. The protein is Protein translocase subunit SecA of Nitrosococcus oceani (strain ATCC 19707 / BCRC 17464 / JCM 30415 / NCIMB 11848 / C-107).